Reading from the N-terminus, the 270-residue chain is HTH-type transcriptional repressor DrrR1 (270 aa).

Over residues M1–T11 the composition is skewed to low complexity. The tract at residues M1 to I28 is disordered. The 61-residue stretch at T49–S109 folds into the HTH tetR-type domain. The segment at residues S72–V91 is a DNA-binding region (H-T-H motif).

It is found in the cytoplasm. With respect to regulation, daunorubicin and doxorubicin can induce dissociation of DrrR1 from its DNA complex. Ampicillin cannot release DrrR1 from the DNA complex at the same concentrations. In terms of biological role, transcriptional regulator that modulates the expression of the drrA2-drrB2 genes, which encode an ABC transporter involved in daunorubicin efflux, in response to intracellular daunorubicin/doxorubicin accumulation. In the absence of daunorubicin or doxorubicin, binds directly to the drrA2-drrB2 promoter region and negatively regulates expression of the genes. In the presence of daunorubicin or doxorubicin, DrrR1 dissociates from DNA, leading to the transcription of the genes. The polypeptide is HTH-type transcriptional repressor DrrR1 (Streptomyces coeruleorubidus).